A 439-amino-acid polypeptide reads, in one-letter code: Uracil-regulated protein 1 (439 aa).

The tract at residues 1–24 (MLATEQSRPAECNGAHAHEKTEEV) is disordered. Residue 268 to 272 (RVHDE) participates in GTP binding. Zn(2+) is bound by residues Cys273, Cys284, and Cys286. Position 315–317 (315–317 (EGR)) interacts with GTP. Residue Asp353 is the Proton acceptor of the active site. Arg355 serves as the catalytic Nucleophile. The GTP site is built by Ser377 and Lys382.

This sequence belongs to the GTP cyclohydrolase II family.

The protein localises to the cytoplasm. It is found in the nucleus. The protein is Uracil-regulated protein 1 (urg1) of Schizosaccharomyces pombe (strain 972 / ATCC 24843) (Fission yeast).